The following is a 374-amino-acid chain: MKFFFILFYPLSLLYQFLFWVSQFKIKPFVLPHVLVISVGNVTMGGTGKTPFVQYLVRYFKAKNKKYAITILSRGYKAKLSKVGAILRDGLSPHLYGDEPSEHKELFPDVQVIIGKNRKESFLKHNQIHSKFHIVILDDGFQHKQIHRDFDIVLLDANGPFGNGQTIPLGFLREPISHLRRAHTIVFTKLTDQNKDKSIRAINILKQKQIPVPSYTSHFLANLVQIDLNTLKSNPVQLPVDQIRQTKVLDEDANDGYFLFTGVGNPKHVLETAESIIGKKINQHRFFPDHYEFEESVLGSIIGEVKQGTVLLTTEKDWVKVRTKKGFLEELKKRNIQIFVIKIEVVVNEKESFESMLAGLVSTYEAKNDLVSMN.

An ATP-binding site is contributed by 43-50 (TMGGTGKT).

The protein belongs to the LpxK family.

The catalysed reaction is a lipid A disaccharide + ATP = a lipid IVA + ADP + H(+). It functions in the pathway glycolipid biosynthesis; lipid IV(A) biosynthesis; lipid IV(A) from (3R)-3-hydroxytetradecanoyl-[acyl-carrier-protein] and UDP-N-acetyl-alpha-D-glucosamine: step 6/6. Transfers the gamma-phosphate of ATP to the 4'-position of a tetraacyldisaccharide 1-phosphate intermediate (termed DS-1-P) to form tetraacyldisaccharide 1,4'-bis-phosphate (lipid IVA). This Leptospira biflexa serovar Patoc (strain Patoc 1 / Ames) protein is Tetraacyldisaccharide 4'-kinase.